A 78-amino-acid chain; its full sequence is Large ribosomal subunit protein bL28 (78 aa).

Belongs to the bacterial ribosomal protein bL28 family.

The chain is Large ribosomal subunit protein bL28 from Methylococcus capsulatus (strain ATCC 33009 / NCIMB 11132 / Bath).